Reading from the N-terminus, the 1099-residue chain is MLESLNRRNSIDSNQADNDNDNDNHSNDELSPSELYYSPSGSPPKSQLLLRKSSSPSSYSPIKSDLPNIYSHLRSNDSESPPQPSPKQQSSLSSSSSSSSSSNTKSSTTKNIFKKLLRINKSSDNIDESRSIVSNNGGSPMSDSTTVTSTLSTDTAPKRGKSIQRSQILHHTDSDSLYLENQIELRPEISKSIGNIKIPSIFTNDGMPLLKISHKSKKRILFWIDPSCFKFSWRMANSTTTTTSATTSATTSGLPQGITNTTALSNSAIISTPAIATSAIHRLSITNRTTHEFVLDDIKSIYIQNEGSGYREELNISQKLEKNWITIIYFNHKKNSLKSLHLITDNDHDFKKLISAIYNLKQLRSQLAKEFLIDLNELDENYVKMLLNKELLAGDNGNVDGNEVDIRKSHKHVREFLSFNDILKYSKRLNINVNTNHLQQIFDQVLLLSSATTEKPVSTPLFEKGLNFEQFKQFVSILKDRKDLQEIWDSLAQGKEVLQFDEIKNFIINIQKENFSDDDDNSTINLIFQKYCSNDNGWNKESLNEYLLSSYSTPYREITQTQTNYYDYPLNEYFISSSHNTYLTGRQVAGDSSVEGYIRTLQRGCRCVEIDIWNGDSNTTTTTVIGTKDDDDKNEYEPIVNHGRTFTKPISFANVIRAIKKFAFIVSPWPLILSLEIHCSPECQIKVVNILKDILGENMIIAPIDIDSVILPSPAELKHKFIIKVKKTTSFQNLIETENGSFTTSTTTTTTTTTTTTTATSLSEDNENNKSNSSSTSSFIIRRRKNKSPKIINELSNLGIYTQGIKFRNFSLPESKTFNHCFSLGEKSINRMIKDDDKKISLDKHNRRYLMRVYPSGTRLKSSNFNPLPYWSHGVQMVATNWQTYDLGQQLNEALFENKIFQGYVLKPSVLRKPTLKSSSSNVDTRTSLTTTNSKTIRFNFEIISGHQLPKFPKDDYKDQAINPYISFEIIGAQDVQWDNNDSSPIAPTTSSSPFIRTTKIIRENGFNPNFNTKFSGSIITTTNDLIFIKFVVYASTSLNYPDYGENFPIAILVTKLNYLKQGYRYIYLNDLLGEQLVYSSIFIKIEYDEDLLNEFINK.

The span at 1–10 (MLESLNRRNS) shows a compositional bias: basic and acidic residues. 2 disordered regions span residues 1 to 109 (MLES…SSTT) and 128 to 164 (ESRS…KSIQ). Composition is skewed to low complexity over residues 43-66 (PPKS…KSDL) and 86-109 (PKQQ…SSTT). Residues 131 to 141 (SIVSNNGGSPM) show a composition bias toward polar residues. The segment covering 142–155 (SDSTTVTSTLSTDT) has biased composition (low complexity). Positions 566–726 (YDYPLNEYFI…LKHKFIIKVK (161 aa)) constitute a PI-PLC X-box domain. Catalysis depends on residues His-579 and His-642. Substrate contacts are provided by Lys-724 and Lys-726. The segment at 742 to 780 (FTTSTTTTTTTTTTTTTATSLSEDNENNKSNSSSTSSFI) is disordered. Positions 743-778 (TTSTTTTTTTTTTTTTATSLSEDNENNKSNSSSTSS) are enriched in low complexity. One can recognise a PI-PLC Y-box domain in the interval 794–912 (ELSNLGIYTQ…GYVLKPSVLR (119 aa)). Substrate-binding residues include Ser-823 and Arg-852. One can recognise a C2 domain in the interval 917-1071 (KSSSSNVDTR…QGYRYIYLND (155 aa)).

The catalysed reaction is a 1,2-diacyl-sn-glycero-3-phospho-(1D-myo-inositol-4,5-bisphosphate) + H2O = 1D-myo-inositol 1,4,5-trisphosphate + a 1,2-diacyl-sn-glycerol + H(+). Functionally, the production of the second messenger molecules diacylglycerol (DAG) and inositol 1,4,5-trisphosphate (IP3) is mediated by activated phosphatidylinositol-specific phospholipase C enzymes. This is 1-phosphatidylinositol 4,5-bisphosphate phosphodiesterase 1 (PLC1) from Candida albicans (Yeast).